The following is a 154-amino-acid chain: Deoxyuridine 5'-triphosphate nucleotidohydrolase (154 aa).

Residues 64–66 (RSG), asparagine 77, 81–83 (TID), and lysine 91 each bind substrate.

Belongs to the dUTPase family. As to quaternary structure, homotrimer. It depends on Mg(2+) as a cofactor.

It carries out the reaction dUTP + H2O = dUMP + diphosphate + H(+). It functions in the pathway pyrimidine metabolism; dUMP biosynthesis; dUMP from dCTP (dUTP route): step 2/2. In terms of biological role, this enzyme is involved in nucleotide metabolism: it produces dUMP, the immediate precursor of thymidine nucleotides and it decreases the intracellular concentration of dUTP so that uracil cannot be incorporated into DNA. The polypeptide is Deoxyuridine 5'-triphosphate nucleotidohydrolase (Mycobacterium sp. (strain JLS)).